Reading from the N-terminus, the 142-residue chain is Mediator of RNA polymerase II transcription subunit 9 (142 aa).

A disordered region spans residues 1–58 (MASSGVAGGRQAEDTLQPPPELLPESKPPPPPQPLPVAALPPPAAPRPQSPAGAKEEN). Ala2 bears the N-acetylalanine mark. Over residues 17-49 (QPPPELLPESKPPPPPQPLPVAALPPPAAPRPQ) the composition is skewed to pro residues. Residues 78-134 (DLHQDLNALKTKFQELRKLIGTMPGIHVSPEQQQQQLHSLREQVRTKNELLQKYKSL) adopt a coiled-coil conformation. Ser106 carries the phosphoserine modification.

The protein belongs to the Mediator complex subunit 9 family. As to quaternary structure, component of the Mediator complex, which is composed of MED1, MED4, MED6, MED7, MED8, MED9, MED10, MED11, MED12, MED13, MED13L, MED14, MED15, MED16, MED17, MED18, MED19, MED20, MED21, MED22, MED23, MED24, MED25, MED26, MED27, MED29, MED30, MED31, CCNC, CDK8 and CDC2L6/CDK11. The MED12, MED13, CCNC and CDK8 subunits form a distinct module termed the CDK8 module. Mediator containing the CDK8 module is less active than Mediator lacking this module in supporting transcriptional activation. Individual preparations of the Mediator complex lacking one or more distinct subunits have been variously termed ARC, CRSP, DRIP, PC2, SMCC and TRAP.

It localises to the nucleus. Component of the Mediator complex, a coactivator involved in the regulated transcription of nearly all RNA polymerase II-dependent genes. Mediator functions as a bridge to convey information from gene-specific regulatory proteins to the basal RNA polymerase II transcription machinery. Mediator is recruited to promoters by direct interactions with regulatory proteins and serves as a scaffold for the assembly of a functional preinitiation complex with RNA polymerase II and the general transcription factors. The sequence is that of Mediator of RNA polymerase II transcription subunit 9 (Med9) from Mus musculus (Mouse).